The chain runs to 454 residues: PC-esterase domain-containing protein 1A (454 aa).

It belongs to the PC-esterase family.

The sequence is that of PC-esterase domain-containing protein 1A (PCED1A) from Homo sapiens (Human).